A 740-amino-acid chain; its full sequence is Phosphoribosylformylglycinamidine synthase subunit PurL (740 aa).

Histidine 49 is an active-site residue. Residues tyrosine 52 and lysine 91 each coordinate ATP. Residue glutamate 93 coordinates Mg(2+). Residues 94–97 and arginine 116 contribute to the substrate site; that span reads SHNH. The active-site Proton acceptor is the histidine 95. Position 117 (aspartate 117) interacts with Mg(2+). Glutamine 245 lines the substrate pocket. Mg(2+) is bound at residue aspartate 273. 317–319 is a binding site for substrate; the sequence is ESQ. The ATP site is built by aspartate 501 and glycine 538. Mg(2+) is bound at residue asparagine 539. Serine 541 contacts substrate.

The protein belongs to the FGAMS family. In terms of assembly, monomer. Part of the FGAM synthase complex composed of 1 PurL, 1 PurQ and 2 PurS subunits.

The protein resides in the cytoplasm. The enzyme catalyses N(2)-formyl-N(1)-(5-phospho-beta-D-ribosyl)glycinamide + L-glutamine + ATP + H2O = 2-formamido-N(1)-(5-O-phospho-beta-D-ribosyl)acetamidine + L-glutamate + ADP + phosphate + H(+). Its pathway is purine metabolism; IMP biosynthesis via de novo pathway; 5-amino-1-(5-phospho-D-ribosyl)imidazole from N(2)-formyl-N(1)-(5-phospho-D-ribosyl)glycinamide: step 1/2. Part of the phosphoribosylformylglycinamidine synthase complex involved in the purines biosynthetic pathway. Catalyzes the ATP-dependent conversion of formylglycinamide ribonucleotide (FGAR) and glutamine to yield formylglycinamidine ribonucleotide (FGAM) and glutamate. The FGAM synthase complex is composed of three subunits. PurQ produces an ammonia molecule by converting glutamine to glutamate. PurL transfers the ammonia molecule to FGAR to form FGAM in an ATP-dependent manner. PurS interacts with PurQ and PurL and is thought to assist in the transfer of the ammonia molecule from PurQ to PurL. This is Phosphoribosylformylglycinamidine synthase subunit PurL from Sulfurovum sp. (strain NBC37-1).